The chain runs to 170 residues: MAQIRIHEENTRIENEVEVSNFLQGEDVLYEKWNISKLPTHLKENYSLTDENKAEILTLFSKEIADVSERRGYKAYDVVSLSNSTPNLDELLINFQKEHHHTDDEVRFIVSGHGIFAIEGKDGRFFDVELEPGDLISVPENARHYFTLQDDRQVVAIRIFVTTEGWVPIY.

The Fe(2+) site is built by His-99, His-101, Glu-105, and His-144. Residues His-99, His-101, Glu-105, and His-144 each contribute to the Ni(2+) site.

The protein belongs to the acireductone dioxygenase (ARD) family. Monomer. The cofactor is Fe(2+). It depends on Ni(2+) as a cofactor.

The catalysed reaction is 1,2-dihydroxy-5-(methylsulfanyl)pent-1-en-3-one + O2 = 3-(methylsulfanyl)propanoate + CO + formate + 2 H(+). The enzyme catalyses 1,2-dihydroxy-5-(methylsulfanyl)pent-1-en-3-one + O2 = 4-methylsulfanyl-2-oxobutanoate + formate + 2 H(+). It functions in the pathway amino-acid biosynthesis; L-methionine biosynthesis via salvage pathway; L-methionine from S-methyl-5-thio-alpha-D-ribose 1-phosphate: step 5/6. Catalyzes 2 different reactions between oxygen and the acireductone 1,2-dihydroxy-3-keto-5-methylthiopentene (DHK-MTPene) depending upon the metal bound in the active site. Fe-containing acireductone dioxygenase (Fe-ARD) produces formate and 2-keto-4-methylthiobutyrate (KMTB), the alpha-ketoacid precursor of methionine in the methionine recycle pathway. Ni-containing acireductone dioxygenase (Ni-ARD) produces methylthiopropionate, carbon monoxide and formate, and does not lie on the methionine recycle pathway. This Bacillus mycoides (strain KBAB4) (Bacillus weihenstephanensis) protein is Acireductone dioxygenase.